The sequence spans 1218 residues: NACHT, LRR and PYD domains-containing protein 1a allele 5 (1218 aa).

The segment covering 1 to 29 has biased composition (polar residues); that stretch reads MGESQSKQESNTRVAQHGSQQDVDPTFQT. Disordered stretches follow at residues 1–44 and 71–91; these read MGES…QVEQ and EMDH…DRSE. Residues 77–87 are compositionally biased toward basic residues; that stretch reads RRHSHQSKKKL. The NACHT domain occupies 175 to 484; sequence QLVIIEGAAG…EFFAAMSYIL (310 aa). ATP is bound at residue 181–188; the sequence is GAAGIGKS. LRR repeat units follow at residues 343–364, 673–693, and 730–750; these read KERN…LTLC, NLEE…RSLC, and RLAE…RQLC. Over residues 799 to 815 the composition is skewed to polar residues; sequence TMPTENTDGEESLTSSK. The segment at 799-842 is disordered; sequence TMPTENTDGEESLTSSKQQQQQSGDKHMEPLGTDDDFWGPSGPV. The tract at residues 835-968 is ZU5; that stretch reads FWGPSGPVST…HFAVLENPSF (134 aa). One can recognise an FIIND domain in the interval 835 to 1118; sequence FWGPSGPVST…LRPALPRMAS (284 aa). The segment at 969 to 1118 is UPA; it reads SPMGVLLRMI…LRPALPRMAS (150 aa). A CARD domain is found at 1122 to 1211; that stretch reads DAPALLHFVD…HLIMDLLEKS (90 aa).

It belongs to the NLRP family. In terms of assembly, interacts (via LRR repeats) with BCL2 and BCL2L1 (via the loop between motifs BH4 and BH3). Interacts with NOD2; this interaction is enhanced in the presence of muramyl dipeptide (MDP) and increases IL1B release. Interacts with EIF2AK2/PKR; this interaction requires EIF2AK2 activity, is accompanied by EIF2AK2 autophosphorylation and promotes inflammasome assembly in response to danger-associated signals. Interacts with MEFV; this interaction targets Nlrp1a to degradation by autophagy, hence preventing excessive IL1B- and IL18-mediated inflammation. Interacts with DPP9; leading to inhibit activation of the inflammasome. DPP9 acts via formation of a ternary complex, composed of a DPP9 homodimer, one full-length NLRP1 protein, and one cleaved C-terminus of Nlrp1a (NACHT, LRR and PYD domains-containing protein 1a, C-terminus). Interacts with DPP8; leading to inhibit activation of the inflammasome, probably via formation of a ternary complex with DPP8. Interacts with the C-terminal part of Nlrp1a (NACHT, LRR and PYD domains-containing protein 1a, C-terminus) in absence of pathogens and other damage-associated signals. As to quaternary structure, interacts with the N-terminal part of Nlrp1a (NACHT, LRR and PYD domains-containing protein 1a, N-terminus) in absence of pathogens and other damage-associated signals. Homomultimer; forms the Nlrp1a inflammasome polymeric complex, a filament composed of homopolymers of this form in response to pathogens and other damage-associated signals. The Nlrp1a inflammasome polymeric complex directly recruits pro-caspase-1 (proCASP1) independently of PYCARD/ASC. Interacts (via CARD domain) with CASP1 (via CARD domain); leading to CASP1 activation. Autocatalytically cleaved. Autocatalytic cleavage in FIIND region occurs constitutively, prior to activation signals, and is required for inflammasome activity (IL1B release), possibly by facilitating CASP1 binding. Both N- and C-terminal parts remain associated non-covalently. Post-translationally, ubiquitinated in response to pathogen-associated signals, leading to its degradation by the proteasome and subsequent release of the cleaved C-terminal part of the protein (NACHT, LRR and PYD domains-containing protein 1a, C-terminus), which polymerizes and forms the Nlrp1a inflammasome.

The protein localises to the cytoplasm. It localises to the cytosol. Its subcellular location is the nucleus. It is found in the inflammasome. With respect to regulation, activated by pathogens and other damage-associated signals: activation promotes ubiquitination and degradation of the N-terminal part, releasing the cleaved C-terminal part of the protein (NACHT, LRR and PYD domains-containing protein 1a, C-terminus), which polymerizes and forms the Nlrp1a inflammasome. Nlrp1a inflammasome is inhibited by DPP8 and DPP9, which sequester the C-terminal fragment of Nlrp1a (NACHT, LRR and PYD domains-containing protein 1a, C-terminus) in a ternary complex, thereby preventing Nlrp1a oligomerization and activation. Nlrp1a inflammasome is strongly activated by Val-boroPro (Talabostat, PT-100), an inhibitor of dipeptidyl peptidases DPP8 and DPP9. Val-boroPro relieves inhibition of DPP8 and/or DPP9 by promoting disruption of the ternary complex, releasing its C-terminal part from autoinhibition. Not activated by cleavage by B.anthracis lethal toxin (LT) endopeptidase. Highly activated by Toxoplasma gondii. Its function is as follows. Acts as the sensor component of the Nlrp1a inflammasome, which mediates inflammasome activation in response to various pathogen-associated signals, leading to subsequent pyroptosis. Inflammasomes are supramolecular complexes that assemble in the cytosol in response to pathogens and other damage-associated signals and play critical roles in innate immunity and inflammation. Acts as a recognition receptor (PRR): recognizes specific pathogens and other damage-associated signals, such as Val-boroPro inhibitor, and mediates the formation of the inflammasome polymeric complex. In response to pathogen-associated signals, the N-terminal part of Nlrp1a is degraded by the proteasome, releasing the cleaved C-terminal part of the protein (NACHT, LRR and PYD domains-containing protein 1a, C-terminus), which polymerizes to initiate the formation of the inflammasome complex: the inflammasome directly recruits pro-caspase-1 (proCASP1) independently of PYCARD/ASC and promotes caspase-1 (CASP1) activation, which subsequently cleaves and activates inflammatory cytokines IL1B and IL18 and gasdermin-D (GSDMD), leading to pyroptosis. In the absence of GSDMD expression, the Nlrp1a inflammasome is able to recruit and activate CASP8, leading to activation of gasdermin-E (GSDME). In terms of biological role, constitutes the precursor of the Nlrp1a inflammasome, which mediates autoproteolytic processing within the FIIND domain to generate the N-terminal and C-terminal parts, which are associated non-covalently in absence of pathogens and other damage-associated signals. Regulatory part that prevents formation of the Nlrp1a inflammasome: in absence of pathogens and other damage-associated signals, interacts with the C-terminal part of Nlrp1a (NACHT, LRR and PYD domains-containing protein 1a, C-terminus), preventing activation of the Nlrp1a inflammasome. In response to pathogen-associated signals, this part is ubiquitinated by the N-end rule pathway and degraded by the proteasome, releasing the cleaved C-terminal part of the protein, which polymerizes and forms the Nlrp1a inflammasome. Functionally, constitutes the active part of the Nlrp1a inflammasome. In absence of pathogens and other damage-associated signals, interacts with the N-terminal part of Nlrp1a (NACHT, LRR and PYD domains-containing protein 1a, N-terminus), preventing activation of the Nlrp1a inflammasome. In response to pathogen-associated signals, the N-terminal part of Nlrp1a is degraded by the proteasome, releasing this form, which polymerizes to form the Nlrp1a inflammasome complex: the Nlrp1a inflammasome complex then directly recruits pro-caspase-1 (proCASP1) and promotes caspase-1 (CASP1) activation, leading to gasdermin-D (GSDMD) cleavage and subsequent pyroptosis. The protein is NACHT, LRR and PYD domains-containing protein 1a allele 5 of Rattus norvegicus (Rat).